The sequence spans 320 residues: o-succinylbenzoate synthase (320 aa).

Lys-133 acts as the Proton donor in catalysis. Positions 161, 190, and 213 each coordinate Mg(2+). Lys-235 acts as the Proton acceptor in catalysis.

This sequence belongs to the mandelate racemase/muconate lactonizing enzyme family. MenC type 1 subfamily. The cofactor is a divalent metal cation.

The enzyme catalyses (1R,6R)-6-hydroxy-2-succinyl-cyclohexa-2,4-diene-1-carboxylate = 2-succinylbenzoate + H2O. The protein operates within quinol/quinone metabolism; 1,4-dihydroxy-2-naphthoate biosynthesis; 1,4-dihydroxy-2-naphthoate from chorismate: step 4/7. Its pathway is quinol/quinone metabolism; menaquinone biosynthesis. Its function is as follows. Converts 2-succinyl-6-hydroxy-2,4-cyclohexadiene-1-carboxylate (SHCHC) to 2-succinylbenzoate (OSB). This Shigella boydii serotype 18 (strain CDC 3083-94 / BS512) protein is o-succinylbenzoate synthase.